The primary structure comprises 138 residues: Large ribosomal subunit protein eL14A (138 aa).

An N-acetylserine modification is found at serine 2.

The protein belongs to the eukaryotic ribosomal protein eL14 family. In terms of assembly, component of the large ribosomal subunit (LSU). Mature yeast ribosomes consist of a small (40S) and a large (60S) subunit. The 40S small subunit contains 1 molecule of ribosomal RNA (18S rRNA) and 33 different proteins (encoded by 57 genes). The large 60S subunit contains 3 rRNA molecules (25S, 5.8S and 5S rRNA) and 46 different proteins (encoded by 81 genes). N-terminally acetylated by acetyltransferase NatA.

It localises to the cytoplasm. Component of the ribosome, a large ribonucleoprotein complex responsible for the synthesis of proteins in the cell. The small ribosomal subunit (SSU) binds messenger RNAs (mRNAs) and translates the encoded message by selecting cognate aminoacyl-transfer RNA (tRNA) molecules. The large subunit (LSU) contains the ribosomal catalytic site termed the peptidyl transferase center (PTC), which catalyzes the formation of peptide bonds, thereby polymerizing the amino acids delivered by tRNAs into a polypeptide chain. The nascent polypeptides leave the ribosome through a tunnel in the LSU and interact with protein factors that function in enzymatic processing, targeting, and the membrane insertion of nascent chains at the exit of the ribosomal tunnel. This is Large ribosomal subunit protein eL14A from Saccharomyces cerevisiae (strain ATCC 204508 / S288c) (Baker's yeast).